A 600-amino-acid polypeptide reads, in one-letter code: NADH-quinone oxidoreductase subunit C/D (600 aa).

Residues 1-190 (MVNNMTDLTA…SPFELTKAKQ (190 aa)) form an NADH dehydrogenase I subunit C region. The interval 214 to 600 (DFMFLNLGPN…IDFVMSDVDR (387 aa)) is NADH dehydrogenase I subunit D.

The protein in the N-terminal section; belongs to the complex I 30 kDa subunit family. This sequence in the C-terminal section; belongs to the complex I 49 kDa subunit family. NDH-1 is composed of 13 different subunits. Subunits NuoB, CD, E, F, and G constitute the peripheral sector of the complex.

It is found in the cell inner membrane. The catalysed reaction is a quinone + NADH + 5 H(+)(in) = a quinol + NAD(+) + 4 H(+)(out). In terms of biological role, NDH-1 shuttles electrons from NADH, via FMN and iron-sulfur (Fe-S) centers, to quinones in the respiratory chain. The immediate electron acceptor for the enzyme in this species is believed to be ubiquinone. Couples the redox reaction to proton translocation (for every two electrons transferred, four hydrogen ions are translocated across the cytoplasmic membrane), and thus conserves the redox energy in a proton gradient. The polypeptide is NADH-quinone oxidoreductase subunit C/D (Escherichia coli O6:H1 (strain CFT073 / ATCC 700928 / UPEC)).